The sequence spans 569 residues: 2-succinyl-5-enolpyruvyl-6-hydroxy-3-cyclohexene-1-carboxylate synthase (569 aa).

Belongs to the TPP enzyme family. MenD subfamily. In terms of assembly, homodimer. Requires Mg(2+) as cofactor. Mn(2+) serves as cofactor. The cofactor is thiamine diphosphate.

It carries out the reaction isochorismate + 2-oxoglutarate + H(+) = 5-enolpyruvoyl-6-hydroxy-2-succinyl-cyclohex-3-ene-1-carboxylate + CO2. Its pathway is quinol/quinone metabolism; 1,4-dihydroxy-2-naphthoate biosynthesis; 1,4-dihydroxy-2-naphthoate from chorismate: step 2/7. It functions in the pathway quinol/quinone metabolism; menaquinone biosynthesis. Its function is as follows. Catalyzes the thiamine diphosphate-dependent decarboxylation of 2-oxoglutarate and the subsequent addition of the resulting succinic semialdehyde-thiamine pyrophosphate anion to isochorismate to yield 2-succinyl-5-enolpyruvyl-6-hydroxy-3-cyclohexene-1-carboxylate (SEPHCHC). The chain is 2-succinyl-5-enolpyruvyl-6-hydroxy-3-cyclohexene-1-carboxylate synthase from Paenarthrobacter aurescens (strain TC1).